The sequence spans 378 residues: Erythronate-4-phosphate dehydrogenase (378 aa).

Residues Ser45 and Thr66 each coordinate substrate. 2 residues coordinate NAD(+): Asp146 and Thr175. Residue Arg208 is part of the active site. Asp232 provides a ligand contact to NAD(+). Glu237 is an active-site residue. His254 (proton donor) is an active-site residue. Residue Gly257 participates in NAD(+) binding. Tyr258 contributes to the substrate binding site.

Belongs to the D-isomer specific 2-hydroxyacid dehydrogenase family. PdxB subfamily. In terms of assembly, homodimer.

It is found in the cytoplasm. The catalysed reaction is 4-phospho-D-erythronate + NAD(+) = (R)-3-hydroxy-2-oxo-4-phosphooxybutanoate + NADH + H(+). The protein operates within cofactor biosynthesis; pyridoxine 5'-phosphate biosynthesis; pyridoxine 5'-phosphate from D-erythrose 4-phosphate: step 2/5. In terms of biological role, catalyzes the oxidation of erythronate-4-phosphate to 3-hydroxy-2-oxo-4-phosphonooxybutanoate. The polypeptide is Erythronate-4-phosphate dehydrogenase (Escherichia coli O7:K1 (strain IAI39 / ExPEC)).